Reading from the N-terminus, the 259-residue chain is Isoepoxydon dehydrogenase patN (259 aa).

The NADP(+) site is built by D69, N96, and K125. Active-site proton donor residues include S143 and S144. 3 residues coordinate NADP(+): Y158, K162, and V191. The Proton acceptor role is filled by Y158. The Lowers pKa of active site Tyr role is filled by K162.

Belongs to the short-chain dehydrogenases/reductases (SDR) family.

The protein resides in the cytoplasm. The protein localises to the cytosol. It catalyses the reaction isoepoxydon + NADP(+) = phyllostine + NADPH + H(+). Its pathway is mycotoxin biosynthesis; patulin biosynthesis. Isoepoxydon dehydrogenase; part of the gene cluster that mediates the biosynthesis of patulin, an acetate-derived tetraketide mycotoxin produced by several fungal species that shows antimicrobial properties against several bacteria. PatN catalyzes the conversion of isoepoxydon into phyllostine. The pathway begins with the synthesis of 6-methylsalicylic acid by the polyketide synthase (PKS) patK via condensation of acetate and malonate units. The 6-methylsalicylic acid decarboxylase patG then catalyzes the decarboxylation of 6-methylsalicylic acid to yield m-cresol (also known as 3-methylphenol). These first reactions occur in the cytosol. The intermediate m-cresol is then transported into the endoplasmic reticulum where the cytochrome P450 monooxygenase patH converts it to m-hydroxybenzyl alcohol, which is further converted to gentisyl alcohol by the cytochrome P450 monooxygenase patI. The oxidoreductases patJ and patO further convert gentisyl alcohol to isoepoxydon in the vacuole. PatN catalyzes then the transformation of isoepoxydon into phyllostine. The cluster protein patF is responsible for the conversion from phyllostine to neopatulin whereas the alcohol dehydrogenase patD converts neopatulin to E-ascladiol. The steps between isoepoxydon and E-ascladiol occur in the cytosol, and E-ascladiol is probably secreted to the extracellular space by one of the cluster-specific transporters patC or patM. Finally, the secreted patulin synthase patE catalyzes the conversion of E-ascladiol to patulin. This chain is Isoepoxydon dehydrogenase patN, found in Penicillium expansum (Blue mold rot fungus).